Here is a 489-residue protein sequence, read N- to C-terminus: FAD-linked oxidoreductase tazG (489 aa).

Residues 1–17 form the signal peptide; it reads MVAFSAILQTALGLSAA. Asn38 is a glycosylation site (N-linked (GlcNAc...) asparagine). The FAD-binding PCMH-type domain maps to 55–224; sequence APSYGAGAIK…TSATYRLPEV (170 aa). 2 N-linked (GlcNAc...) asparagine glycosylation sites follow: Asn242 and Asn306.

It belongs to the oxygen-dependent FAD-linked oxidoreductase family. The cofactor is FAD.

Its pathway is secondary metabolite biosynthesis. In terms of biological role, FAD-linked oxidoreductase; part of the gene cluster that mediates the biosynthesis of azaterrilone A and other azaphilones, a class of fungal metabolites characterized by a highly oxygenated pyrano-quinone bicyclic core and exhibiting a broad range of bioactivities. The first step of the pathway begins with the non-reducing polyketide synthase tazA that assembles one acetyl-CoA starter unit, five malonyl-CoA units, and catalyzes a series of Claisen condensations, methylation, PT-mediated cyclization, and finally releases the first hexaketide precursor through the R-domain. The tazA product then undergoes reduction on its terminal ketone and the following pyran-ring formation by yet undetermined enzyme(s). Dehydration and enoyl reduction, possibly involving the trans-enoyl reductase tazE leads to the next intermediate. TazD is predicted as an acetyltransferase and might catalyze the acetylation steps leading to the synthesis of azaterrilone A. Azaterrilone A is not the final product of the taz pathway and both the highly reducing polyketide synthase tazB and the dual enzyme tazHJ catalyze late steps of the pathway, leading to the production of the 2 final stereoisomers that contain additional polyketide modification whose structures have still to be determined. This chain is FAD-linked oxidoreductase tazG, found in Aspergillus terreus (strain NIH 2624 / FGSC A1156).